The chain runs to 132 residues: Iron-sulfur cluster assembly 1 homolog, mitochondrial (132 aa).

Residues 1–15 constitute a mitochondrion transit peptide; it reads MASSASSVVRATVRA. The Fe cation site is built by Cys-60, Cys-124, and Cys-126.

It belongs to the HesB/IscA family. In terms of assembly, homooligomer, forming a rod-shaped structure 24 nm in length that may arise through a double-helical assembly of subunits. Interacts with CRY4; CRY4 seems to be associated with the outside of the rod-shaped homooligomer. Does not interact with CRY1 or CRY2. As to expression, detected in retina, especially in the retinal ganglion layer, the inner nuclear layer and the outer nuclear layer. Detected in retina visual pigment cells (at protein level).

Its subcellular location is the mitochondrion. Involved in the maturation of mitochondrial 4Fe-4S proteins functioning late in the iron-sulfur cluster assembly pathway. Probably involved in the binding of an intermediate of Fe/S cluster assembly. Component of a putative magnetoreceptor complex formed by ISCA1 and CRY4, a member of the cryptochrome family that are known to be required for light-dependent magnetosensitivity in various orgnisms. The rod-like assembly may facilitate the perception of the Earth's weak magnetic field. Both ISCA1 and the complex with CRY4 have magnetic properties and are attracted to iron beads. When exposed to a magnetic field of 1 mT (superior to the natural magnetic field), over 50% of the rod-like complexes align more or less in parallel with the magnetic field at room temperature. This is Iron-sulfur cluster assembly 1 homolog, mitochondrial (ISCA1) from Columba livia (Rock dove).